A 287-amino-acid polypeptide reads, in one-letter code: Lipoyl synthase (287 aa).

Cysteine 38, cysteine 43, cysteine 49, cysteine 64, cysteine 68, cysteine 71, and serine 277 together coordinate [4Fe-4S] cluster. A Radical SAM core domain is found at 50–266 (WSRGTATFLL…KTVAESLGLR (217 aa)).

Belongs to the radical SAM superfamily. Lipoyl synthase family. Requires [4Fe-4S] cluster as cofactor.

It is found in the cytoplasm. It carries out the reaction [[Fe-S] cluster scaffold protein carrying a second [4Fe-4S](2+) cluster] + N(6)-octanoyl-L-lysyl-[protein] + 2 oxidized [2Fe-2S]-[ferredoxin] + 2 S-adenosyl-L-methionine + 4 H(+) = [[Fe-S] cluster scaffold protein] + N(6)-[(R)-dihydrolipoyl]-L-lysyl-[protein] + 4 Fe(3+) + 2 hydrogen sulfide + 2 5'-deoxyadenosine + 2 L-methionine + 2 reduced [2Fe-2S]-[ferredoxin]. Its pathway is protein modification; protein lipoylation via endogenous pathway; protein N(6)-(lipoyl)lysine from octanoyl-[acyl-carrier-protein]: step 2/2. In terms of biological role, catalyzes the radical-mediated insertion of two sulfur atoms into the C-6 and C-8 positions of the octanoyl moiety bound to the lipoyl domains of lipoate-dependent enzymes, thereby converting the octanoylated domains into lipoylated derivatives. The sequence is that of Lipoyl synthase from Chlorobium phaeobacteroides (strain DSM 266 / SMG 266 / 2430).